A 765-amino-acid chain; its full sequence is Spastin (765 aa).

Positions 1 to 94 (MVRTKNQSSS…TSGYGPRGGT (94 aa)) are disordered. Residues 1-107 (MVRTKNQSSS…KQNLYVVSFP (107 aa)) are Cytoplasmic-facing. Residues 1–195 (MVRTKNQSSS…ALLPLEMATN (195 aa)) are required for localization to punctate cytoplasmic foci. The segment covering 8–19 (SSSSSASSSTKS) has biased composition (low complexity). Positions 48 to 58 (SSKLSSNRQRA) are enriched in polar residues. Positions 59–72 (TITTTTTSTTPGSS) are enriched in low complexity. Residues 108–128 (IIFLFNVLRSLIYQLFCIFRY) constitute an intramembrane region (helical). At 129–765 (LYCASTKVIY…WSQDYGDITI (637 aa)) the chain is on the cytoplasmic side. Residues 193-765 (ATNRGGSGGY…WSQDYGDITI (573 aa)) are sufficient for interaction with microtubules and microtubule severing. Residues 218–293 (HRRAFEYISK…SMARDRLHFL (76 aa)) form the MIT domain. Positions 329 to 462 (QTNSKAAAVE…GSGSGASTPM (134 aa)) are disordered. Residues 355 to 364 (SGTGSSAGTS) show a composition bias toward low complexity. Composition is skewed to polar residues over residues 389–407 (NKSQTLPRNLGSKTTSTSV) and 428–444 (QFSSGRNTPPQRSRTPI). Residues 446 to 462 (NNAASGSGSGSGASTPM) are required for interaction with microtubules. Position 530-537 (530-537 (GPPGNGKT)) interacts with ATP.

It belongs to the AAA ATPase family. Spastin subfamily. In terms of assembly, homohexamer. The homohexamer is stabilized by ATP-binding. The homohexamer may adopt a ring conformation through which microtubules pass prior to being severed. Interacts with microtubules. Interacts with atl; may be involved in microtubule dynamics.

It localises to the membrane. The protein localises to the cytoplasm. The protein resides in the cytoskeleton. It is found in the microtubule organizing center. Its subcellular location is the centrosome. It localises to the chromosome. The protein localises to the lipid droplet. The catalysed reaction is n ATP + n H2O + a microtubule = n ADP + n phosphate + (n+1) alpha/beta tubulin heterodimers.. In terms of biological role, ATP-dependent microtubule severing protein. Stimulates microtubule minus-end depolymerization and poleward microtubule flux in the mitotic spindle. Regulates microtubule stability in the neuromuscular junction synapse. Involved in lipid metabolism by regulating the size and distribution of lipid droplets. Involved in axon regeneration by regulating microtubule severing. This chain is Spastin, found in Drosophila mojavensis (Fruit fly).